A 1139-amino-acid chain; its full sequence is GRIP and coiled-coil domain-containing protein (1139 aa).

Residues 366–388 (NDDSQINNNVSNKVNSPDDDPNT) are disordered. Over residues 369–380 (SQINNNVSNKVN) the composition is skewed to polar residues. Coiled-coil stretches lie at residues 472-648 (VTKL…INNE) and 758-877 (LYIL…ETQQ). Residues 1004-1024 (NEQENDNNNNNNNNNNNNNVE) form a disordered region. The span at 1009–1022 (DNNNNNNNNNNNNN) shows a compositional bias: low complexity. Residues 1043-1084 (YKKIRKKLETYEILLNEQQEGKKKMTEEINSLKNQVKNYESI) adopt a coiled-coil conformation. Residues 1084 to 1135 (INGNYQHIIYQKNILSNFIAQIPSRIQVDDYVSVIFNSFNFSNQEIEAINIK) form the GRIP domain.

This chain is GRIP and coiled-coil domain-containing protein, found in Plasmodium falciparum (isolate 3D7).